We begin with the raw amino-acid sequence, 356 residues long: Phosphate acyltransferase (356 aa).

This sequence belongs to the PlsX family. Homodimer. Probably interacts with PlsY.

Its subcellular location is the cytoplasm. It catalyses the reaction a fatty acyl-[ACP] + phosphate = an acyl phosphate + holo-[ACP]. Its pathway is lipid metabolism; phospholipid metabolism. In terms of biological role, catalyzes the reversible formation of acyl-phosphate (acyl-PO(4)) from acyl-[acyl-carrier-protein] (acyl-ACP). This enzyme utilizes acyl-ACP as fatty acyl donor, but not acyl-CoA. This chain is Phosphate acyltransferase, found in Escherichia coli (strain K12 / DH10B).